Reading from the N-terminus, the 136-residue chain is Large ribosomal subunit protein uL14 (136 aa).

The protein belongs to the universal ribosomal protein uL14 family.

The polypeptide is Large ribosomal subunit protein uL14 (rpl23) (Dictyostelium discoideum (Social amoeba)).